A 113-amino-acid chain; its full sequence is MNTVRVTFLLVFVLVVSLGQADKDENRMEMQEKTEQGKSYLDFAENLLLQKLEELEAKLLEEDSEESRNSRQKRRIGEGVPCDENDPRCCPRLVCLKPTLHGIWYKSYYCYKK.

The signal sequence occupies residues 1–21; sequence MNTVRVTFLLVFVLVVSLGQA. The propeptide occupies 22–74; it reads DKDENRMEMQEKTEQGKSYLDFAENLLLQKLEELEAKLLEEDSEESRNSRQKR. The interval 61–83 is disordered; it reads EEDSEESRNSRQKRRIGEGVPCD. 2 disulfides stabilise this stretch: C82–C95 and C89–C110.

This sequence belongs to the neurotoxin 14 (magi-1) family. 01 (HNTX-16) subfamily. As to expression, expressed by the venom gland.

It is found in the secreted. Probable ion channel inhibitor. The chain is U11-theraphotoxin-Hhn1h from Cyriopagopus hainanus (Chinese bird spider).